The sequence spans 265 residues: Undecaprenyl-diphosphatase (265 aa).

8 helical membrane passes run 14 to 34, 40 to 60, 79 to 99, 112 to 132, 141 to 161, 182 to 202, 217 to 237, and 242 to 262; these read GLGE…PWLF, SLVF…VYFW, GKLF…GYLF, LLIA…DSIA, MNVF…FPGI, AKFS…VSLL, IGFF…LGIV, and FKIF…FYLL.

The protein belongs to the UppP family.

The protein localises to the cell membrane. The catalysed reaction is di-trans,octa-cis-undecaprenyl diphosphate + H2O = di-trans,octa-cis-undecaprenyl phosphate + phosphate + H(+). In terms of biological role, catalyzes the dephosphorylation of undecaprenyl diphosphate (UPP). Confers resistance to bacitracin. The polypeptide is Undecaprenyl-diphosphatase (Caldicellulosiruptor bescii (strain ATCC BAA-1888 / DSM 6725 / KCTC 15123 / Z-1320) (Anaerocellum thermophilum)).